A 480-amino-acid chain; its full sequence is Trigger factor (480 aa).

In terms of domain architecture, PPIase FKBP-type spans 169–264 (GDIAVVDFKG…LKELKEKELP (96 aa)). Positions 441 to 480 (PEGSLSPAEETEAAESDADADVSQTEQENSEPSTTEVTEG) are disordered. The segment covering 449–460 (EETEAAESDADA) has biased composition (acidic residues). A compositionally biased stretch (polar residues) spans 462 to 480 (VSQTEQENSEPSTTEVTEG).

The protein belongs to the FKBP-type PPIase family. Tig subfamily.

It is found in the cytoplasm. It carries out the reaction [protein]-peptidylproline (omega=180) = [protein]-peptidylproline (omega=0). Involved in protein export. Acts as a chaperone by maintaining the newly synthesized protein in an open conformation. Functions as a peptidyl-prolyl cis-trans isomerase. This chain is Trigger factor, found in Nostoc punctiforme (strain ATCC 29133 / PCC 73102).